The sequence spans 99 residues: Putative membrane protein insertion efficiency factor (99 aa).

It belongs to the UPF0161 family.

The protein localises to the cell inner membrane. Functionally, could be involved in insertion of integral membrane proteins into the membrane. The protein is Putative membrane protein insertion efficiency factor of Salinibacter ruber (strain DSM 13855 / M31).